Here is a 414-residue protein sequence, read N- to C-terminus: Putative L-lactate dehydrogenase (414 aa).

Residues 29–406 enclose the FMN hydroxy acid dehydrogenase domain; that stretch reads RRLGAALTIQ…SPRHVTQLRR (378 aa). Y55 is a binding site for a 2-oxocarboxylate. FMN-binding residues include S137 and Q159. Y161 is a binding site for a 2-oxocarboxylate. T187 contacts FMN. R196 is an a 2-oxocarboxylate binding site. FMN is bound at residue K277. H301 (proton acceptor) is an active-site residue. R304 is an a 2-oxocarboxylate binding site. Residues 332–336 and 355–356 contribute to the FMN site; these read DTGIM and GR.

It belongs to the FMN-dependent alpha-hydroxy acid dehydrogenase family. FMN serves as cofactor.

The enzyme catalyses (S)-lactate + A = pyruvate + AH2. In Mycobacterium tuberculosis (strain ATCC 25618 / H37Rv), this protein is Putative L-lactate dehydrogenase (lldD).